The following is a 374-amino-acid chain: 1,3,6,8-tetrahydroxynaphthalene synthase (374 aa).

Residue cysteine 138 is part of the active site.

Belongs to the thiolase-like superfamily. Chalcone/stilbene synthases family. Homodimer.

The enzyme catalyses 5 malonyl-CoA + 5 H(+) = naphthalene-1,3,6,8-tetrol + 5 CO2 + 5 CoA + H2O. Its pathway is pigment biosynthesis; melanin biosynthesis. Functionally, involved in the biosynthesis of melanin but also various secondary metabolites containing a naphthoquinone ring. Catalyzes the iterative condensation of five CoA-linked malonyl units to form a pentaketide intermediate. THNS subsequently catalyzes the dual intramolecular Claisen and aldol condensations of this linear intermediate to produce the fused ring of 1,3,6,8-tetrahydroxynaphthalene (THN). This Streptomyces coelicolor (strain ATCC BAA-471 / A3(2) / M145) protein is 1,3,6,8-tetrahydroxynaphthalene synthase.